Consider the following 999-residue polypeptide: Transcription-repair-coupling factor (999 aa).

Residues 499–656 form the Helicase ATP-binding domain; that stretch reads DLSSHRVMDR…LSQIKGISSL (158 aa). ATP is bound at residue 512 to 519; that stretch reads GDVGFGKT. The DEEH box signature appears at 609–612; sequence DEEH. The Helicase C-terminal domain occupies 677-833; sequence LLKEIIYREL…SVAYHDLEIR (157 aa).

The protein in the N-terminal section; belongs to the UvrB family. In the C-terminal section; belongs to the helicase family. RecG subfamily.

It localises to the cytoplasm. Its function is as follows. Couples transcription and DNA repair by recognizing RNA polymerase (RNAP) stalled at DNA lesions. Mediates ATP-dependent release of RNAP and its truncated transcript from the DNA, and recruitment of nucleotide excision repair machinery to the damaged site. This is Transcription-repair-coupling factor from Helicobacter pylori (strain ATCC 700392 / 26695) (Campylobacter pylori).